The primary structure comprises 156 residues: Small ribosomal subunit protein uS7 (156 aa).

Belongs to the universal ribosomal protein uS7 family. Part of the 30S ribosomal subunit. Contacts proteins S9 and S11.

Its function is as follows. One of the primary rRNA binding proteins, it binds directly to 16S rRNA where it nucleates assembly of the head domain of the 30S subunit. Is located at the subunit interface close to the decoding center, probably blocks exit of the E-site tRNA. In Pseudomonas syringae pv. tomato (strain ATCC BAA-871 / DC3000), this protein is Small ribosomal subunit protein uS7.